The sequence spans 623 residues: Xaa-Pro aminopeptidase 1 (623 aa).

Arg-77 is an a peptide binding site. An N6-acetyllysine modification is found at Lys-304. Position 395 (His-395) interacts with a peptide. Residues Asp-415, Asp-426, and His-489 each coordinate Mn(2+). A peptide-binding residues include His-489, His-498, and Glu-523. Positions 523 and 537 each coordinate Mn(2+).

It belongs to the peptidase M24B family. As to quaternary structure, homodimer. Requires Mn(2+) as cofactor. In terms of tissue distribution, expressed in all tissues tested, including liver, adrenal decapsular tissue, adrenal capsular tissue, corpus luteum, testis, submandibular gland, thymus, brain, cerebellum and heart. Highest levels in testis.

The protein resides in the cytoplasm. It catalyses the reaction Release of any N-terminal amino acid, including proline, that is linked to proline, even from a dipeptide or tripeptide.. Inhibited by inositol hexakisphosphate. Its function is as follows. Metalloaminopeptidase that catalyzes the removal of a penultimate prolyl residue from the N-termini of peptides, such as Arg-Pro-Pro. Contributes to the degradation of bradykinin. The polypeptide is Xaa-Pro aminopeptidase 1 (Rattus norvegicus (Rat)).